The chain runs to 224 residues: MKRSKRYQSLCSLIEPKLYSPQEALKLLKKLATAKFVETAEAHIRLNLDPKYTDQQIRATVVLPHGTGKAIRIAVITKQSSHIEGADLVGSDDLCAQIAQSIINFDCLIATPDMMPTLAKLGKILGPRGLMPSPKSGTVTTNVAEAIQAFRRGQIEYRTDKTGIVHLAFGRMDFNEQHLYDNLVAIKESVETNKPSGASGLYWKSFAIATSMSPSIRLNIQQWS.

This sequence belongs to the universal ribosomal protein uL1 family. Part of the 50S ribosomal subunit.

It is found in the plastid. The protein resides in the chloroplast. Binds directly to 23S rRNA. Might be involved in E site tRNA release (Potential). This Cyanidioschyzon merolae (strain NIES-3377 / 10D) (Unicellular red alga) protein is Large ribosomal subunit protein uL1c (rpl1).